The chain runs to 145 residues: Acidic phospholipase A2 1 (145 aa).

Positions 1–21 (MYPAHLLVLLAVCVSLLGATA) are cleaved as a signal peptide. The propeptide occupies 22–27 (IPPLPL). 7 disulfide bridges follow: Cys-38-Cys-98, Cys-54-Cys-144, Cys-56-Cys-72, Cys-71-Cys-125, Cys-78-Cys-118, Cys-87-Cys-111, and Cys-105-Cys-116. Residues Tyr-55, Gly-57, and Gly-59 each contribute to the Ca(2+) site. His-75 is a catalytic residue. Asp-76 is a Ca(2+) binding site. Asp-119 is a catalytic residue.

Belongs to the phospholipase A2 family. Group I subfamily. D49 sub-subfamily. In terms of assembly, monomer. Ca(2+) is required as a cofactor. In terms of tissue distribution, expressed by the venom gland.

It is found in the secreted. The enzyme catalyses a 1,2-diacyl-sn-glycero-3-phosphocholine + H2O = a 1-acyl-sn-glycero-3-phosphocholine + a fatty acid + H(+). PLA2 catalyzes the calcium-dependent hydrolysis of the 2-acyl groups in 3-sn-phosphoglycerides. The polypeptide is Acidic phospholipase A2 1 (Laticauda semifasciata (Black-banded sea krait)).